A 697-amino-acid chain; its full sequence is MNKFSREAGEVVLLRAITKYSSQQGTLFFTSLRLVWVQSGYSEPSLHLHISEIKNQFISTPKSAKALLRLSVRDSIKNALQEFVFEFTHPTNARSDLNSFRDKIAATANLTAPTLPVSASNGSNTTSPTNGTSPINGTSPTMTGLKVNPDGTITNDPLSSQPAQVEEKAETKYLSKLKQPSLSEQQIKQRVILLQSNKELRELYEQMVNKDRVISESDFWESRKSMLKNDSTRSEKQHTGMPSNLLADVRPSSETPNAVHYRFTPTVIHQIFIQHPSVEKAYKANVPLKISEQNFWKKYVQSKYFYRDRSSANAPPVDDDLFSKYETDEQNKIRILKRKLIDINPLVDLSSTDGFDTDVHSGYGVLLDQSQDPNKLEKALPLLRKFNRHSALVLGSKDLLTNNSINIEKDQKNLKKTKKDENSTSTPTTTTTTTNTTNTTNTTTTTTTNNTTIKDPNLYNGDDEENISVEQMEKILENHKKLVNQHIIIDDLQEENSQTLTLLKISDQKRYFEGHSTNNILSDKEKSQLIDILDFDYKNWQPNLPQVFYQTHSSSSILQEPNISVHSEIFEPYNKAAINSKEEYNLPESSFKRDLFQSFHHCNELLRHFWATTFTLGRGAPPTSQQIDKNNKISSAIALQYDKIEEKKKMLISQNKVNQSSLFTPILESLHKAIEKKESQTNQYTFKNNNNNFHTIS.

Residues 115-136 (LPVSASNGSNTTSPTNGTSPIN) show a composition bias toward low complexity. Disordered regions lie at residues 115–141 (LPVS…TSPT) and 228–250 (KNDS…ADVR). 2 consecutive BSD domains span residues 174–231 (LSKL…KNDS) and 255–307 (TPNA…YFYR). Basic and acidic residues predominate over residues 412–422 (KNLKKTKKDEN). A disordered region spans residues 412-462 (KNLKKTKKDENSTSTPTTTTTTTNTTNTTNTTTTTTTNNTTIKDPNLYNGD). Positions 423-452 (STSTPTTTTTTTNTTNTTNTTTTTTTNNTT) are enriched in low complexity.

The protein belongs to the TFB1 family. Component of the 7-subunit TFIIH core complex composed of XPB/repB, XPD/repD, gtf2h1, gtf2h2, gtf2h3, gtf2h4 and gtf2h5, which is active in NER. The core complex associates with the 3-subunit CDK-activating kinase (CAK) module composed of cycH/cyclin H, cdk7 and mnat1 to form the 10-subunit holoenzyme (holo-TFIIH) active in transcription.

The protein localises to the nucleus. Component of the general transcription and DNA repair factor IIH (TFIIH) core complex, which is involved in general and transcription-coupled nucleotide excision repair (NER) of damaged DNA and, when complexed to CAK, in RNA transcription by RNA polymerase II. In NER, TFIIH acts by opening DNA around the lesion to allow the excision of the damaged oligonucleotide and its replacement by a new DNA fragment. In transcription, TFIIH has an essential role in transcription initiation. When the pre-initiation complex (PIC) has been established, TFIIH is required for promoter opening and promoter escape. Phosphorylation of the C-terminal tail (CTD) of the largest subunit of RNA polymerase II by the kinase module CAK controls the initiation of transcription. This is General transcription factor IIH subunit 1 (gtf2h1) from Dictyostelium discoideum (Social amoeba).